A 174-amino-acid chain; its full sequence is Large ribosomal subunit protein uL10 (174 aa).

Belongs to the universal ribosomal protein uL10 family. As to quaternary structure, part of the ribosomal stalk of the 50S ribosomal subunit. The N-terminus interacts with L11 and the large rRNA to form the base of the stalk. The C-terminus forms an elongated spine to which L12 dimers bind in a sequential fashion forming a multimeric L10(L12)X complex.

Its function is as follows. Forms part of the ribosomal stalk, playing a central role in the interaction of the ribosome with GTP-bound translation factors. In Vesicomyosocius okutanii subsp. Calyptogena okutanii (strain HA), this protein is Large ribosomal subunit protein uL10.